A 302-amino-acid polypeptide reads, in one-letter code: Cyclin-dependent kinase 1 (302 aa).

Residues 4 to 287 (YLKIEKIGEG…ARQAMTHPYF (284 aa)) enclose the Protein kinase domain. ATP-binding positions include 10 to 18 (IGEGTYGVV) and Lys-33. At Thr-14 the chain carries Phosphothreonine. Phosphotyrosine; by wee1 and wee2 is present on Tyr-15. Residue Asp-128 is the Proton acceptor of the active site. The residue at position 161 (Thr-161) is a Phosphothreonine; by cak.

This sequence belongs to the protein kinase superfamily. CMGC Ser/Thr protein kinase family. CDC2/CDKX subfamily. As to quaternary structure, forms a stable but non-covalent complex with cyclin B in mature oocytes. In terms of processing, phosphorylation at Tyr-15 by wee1 and wee2 inhibits the protein kinase activity and acts negative regulator of entry into mitosis (G2 to M transition).

It is found in the nucleus. It localises to the cytoplasm. The protein localises to the cytoskeleton. The protein resides in the microtubule organizing center. Its subcellular location is the centrosome. It catalyses the reaction L-seryl-[protein] + ATP = O-phospho-L-seryl-[protein] + ADP + H(+). The enzyme catalyses L-threonyl-[protein] + ATP = O-phospho-L-threonyl-[protein] + ADP + H(+). It carries out the reaction [DNA-directed RNA polymerase] + ATP = phospho-[DNA-directed RNA polymerase] + ADP + H(+). Its activity is regulated as follows. Phosphorylation at Thr-14 or Tyr-15 inactivates the enzyme, while phosphorylation at Thr-161 activates it. In terms of biological role, plays a key role in the control of the eukaryotic cell cycle by modulating the centrosome cycle as well as mitotic onset; promotes G2-M transition via association with multiple interphase cyclins. During G2 and early mitosis, CDC25A/B/C-mediated dephosphorylation activates CDK1/cyclin complexes which phosphorylate several substrates that trigger at least centrosome separation, Golgi dynamics, nuclear envelope breakdown and chromosome condensation. Once chromosomes are condensed and aligned at the metaphase plate, CDK1 activity is switched off by WEE1- and PKMYT1-mediated phosphorylation to allow sister chromatid separation, chromosome decondensation, reformation of the nuclear envelope and cytokinesis. Catalyzes lamin (LMNA, LMNB1 and LMNB2) phosphorylation at the onset of mitosis, promoting nuclear envelope breakdown. This is Cyclin-dependent kinase 1 (cdk1) from Carassius auratus (Goldfish).